The primary structure comprises 414 residues: Coenzyme A biosynthesis bifunctional protein CoaBC (414 aa).

A phosphopantothenoylcysteine decarboxylase region spans residues 1–191; the sequence is MSARKRIVVG…ALPYDMAGVK (191 aa). The interval 192-414 is phosphopantothenate--cysteine ligase; the sequence is ALVTAGGTRE…IAAFLKSQDG (223 aa). CTP is bound by residues 275 to 277, aspartate 281, lysine 291, 293 to 294, 308 to 311, phenylalanine 332, lysine 350, and lysine 354; these read MAA, KK, and DDVL.

The protein in the N-terminal section; belongs to the HFCD (homo-oligomeric flavin containing Cys decarboxylase) superfamily. In the C-terminal section; belongs to the PPC synthetase family. Homododecamer. Mg(2+) serves as cofactor. FMN is required as a cofactor.

The catalysed reaction is N-[(R)-4-phosphopantothenoyl]-L-cysteine + H(+) = (R)-4'-phosphopantetheine + CO2. The enzyme catalyses (R)-4'-phosphopantothenate + L-cysteine + CTP = N-[(R)-4-phosphopantothenoyl]-L-cysteine + CMP + diphosphate + H(+). It participates in cofactor biosynthesis; coenzyme A biosynthesis; CoA from (R)-pantothenate: step 2/5. Its pathway is cofactor biosynthesis; coenzyme A biosynthesis; CoA from (R)-pantothenate: step 3/5. Two related chemical scaffolds that potently inhibit the activity of the CoaB moiety of CoaBC through a cryptic allosteric site that sits in the dimer interface region of the CoaB enzyme were identified. Its function is as follows. Catalyzes two sequential steps in the biosynthesis of coenzyme A. In the first step cysteine is conjugated to 4'-phosphopantothenate to form 4-phosphopantothenoylcysteine. In the second step the latter compound is decarboxylated to form 4'-phosphopantotheine. This chain is Coenzyme A biosynthesis bifunctional protein CoaBC, found in Mycolicibacterium smegmatis (strain ATCC 700084 / mc(2)155) (Mycobacterium smegmatis).